A 318-amino-acid polypeptide reads, in one-letter code: Small ribosomal subunit protein mS26 (318 aa).

The disordered stretch occupies residues isoleucine 295–leucine 318. Residues asparagine 300–leucine 318 are compositionally biased toward low complexity.

It belongs to the mitochondrion-specific ribosomal protein mS26 family. Component of the mitochondrial small ribosomal subunit (mt-SSU). Mature yeast 74S mitochondrial ribosomes consist of a small (37S) and a large (54S) subunit. The 37S small subunit contains a 15S ribosomal RNA (15S mt-rRNA) and 34 different proteins. The 54S large subunit contains a 21S rRNA (21S mt-rRNA) and 46 different proteins.

It is found in the mitochondrion. Its function is as follows. Component of the mitochondrial ribosome (mitoribosome), a dedicated translation machinery responsible for the synthesis of mitochondrial genome-encoded proteins, including at least some of the essential transmembrane subunits of the mitochondrial respiratory chain. The mitoribosomes are attached to the mitochondrial inner membrane and translation products are cotranslationally integrated into the membrane. The protein is Small ribosomal subunit protein mS26 (PET123) of Saccharomyces cerevisiae (strain ATCC 204508 / S288c) (Baker's yeast).